The chain runs to 141 residues: Large-conductance mechanosensitive channel (141 aa).

The next 2 helical transmembrane spans lie at 16–36 and 83–103; these read VIDLAVGVIIGGAFGKIVDSL and GAFINTTIDFLIIALAIFVAI.

Belongs to the MscL family. In terms of assembly, homopentamer.

The protein localises to the cell inner membrane. Functionally, channel that opens in response to stretch forces in the membrane lipid bilayer. May participate in the regulation of osmotic pressure changes within the cell. The sequence is that of Large-conductance mechanosensitive channel from Azoarcus sp. (strain BH72).